A 334-amino-acid polypeptide reads, in one-letter code: MAAAASPAFLLRLPLLLLLSSWCRTGLADPHSLCYDITVIPKFRPGPRWCAVQGQVDEKTFLHYDCGSKTVTPVSPLGKKLNVTTAWKAQNPVLREVVDILTEQLLDIQLENYIPKEPLTLQARMSCEQKAEGHGSGSWQLSFDGQIFLLFDSENRMWTTVHPGARKMKEKWENDKDMTMSFHYISMGDCTGWLEDFLMGMDSTLEPSAGAPPTMSSGTAQPRATATTLILCCLLIMCLLICSRHSLTQSHGHHPQSLQPPPHPPLLHPTWLLRRVLWSDSYQIAKRPLSGGHVTRVTLPIIGDDSHSLPCPLALYTINNGAARYSEPLQVSIS.

The N-terminal stretch at 1–25 is a signal peptide; it reads MAAAASPAFLLRLPLLLLLSSWCRT. Residues 26–223 lie on the Extracellular side of the membrane; that stretch reads GLADPHSLCY…TMSSGTAQPR (198 aa). An MHC class I alpha-1 like region spans residues 29–117; it reads DPHSLCYDIT…IQLENYIPKE (89 aa). The cysteines at positions 50 and 66 are disulfide-linked. N-linked (GlcNAc...) asparagine glycosylation occurs at Asn-82. An MHC class I alpha-2 like region spans residues 118-210; it reads PLTLQARMSC…MDSTLEPSAG (93 aa). Cys-127 and Cys-190 form a disulfide bridge. The GPI-anchor amidated glycine moiety is linked to residue Gly-218. Residues 219–334 constitute a propeptide, removed in mature form; the sequence is TAQPRATATT…YSEPLQVSIS (116 aa). The helical transmembrane segment at 224–243 threads the bilayer; the sequence is ATATTLILCCLLIMCLLICS. At 244–334 the chain is on the cytoplasmic side; that stretch reads RHSLTQSHGH…YSEPLQVSIS (91 aa).

Belongs to the MHC class I family. As to quaternary structure, interacts with KLRK1/NKG2D. (Microbial infection) In CMV-infected cells, interacts with the viral glycoprotein UL16; this interaction causes RAET1G retention in the endoplasmic reticulum and cis-Golgi and prevents binding to and activation of KLRK1/NKG2D, providing CMV with an immune evasion mechanism. The functional form is cleaved C-terminally of the GPI-anchor and yields a 28 kDa protein. In terms of tissue distribution, isoform 1 is highly expressed in colon and in a number of tumor cell lines and highly restricted in normal tissues. Both isoforms are frequently expressed in cell lines derived from epithelial cancers, and in primary breast cancers.

The protein resides in the cell membrane. It is found in the endoplasmic reticulum. It localises to the secreted. In terms of biological role, binds and activates the KLRK1/NKG2D receptor, mediating natural killer cell cytotoxicity. Its function is as follows. Down-regulates the expression of KLRK1 and stimulates natural killer cells to secrete IFNG. Stimulates natural killer cells to secrete IFNG. The sequence is that of UL-16 binding protein 5 from Homo sapiens (Human).